Reading from the N-terminus, the 66-residue chain is Beta-mammal toxin Cv1 (66 aa).

Residues 1-66 (KEGYIVNLST…VWPLPKKTCN (66 aa)) form the LCN-type CS-alpha/beta domain. Cystine bridges form between C12/C65, C16/C41, C25/C46, and C29/C48.

Expressed by the venom gland.

It is found in the secreted. With respect to regulation, is susceptible to be neutralized by human antibodies scFvs 10FG2 and HV. Its function is as follows. Beta toxins bind voltage-independently at site-4 of sodium channels (Nav) and reduces peak current and shifts the voltage of activation toward more negative potentials thereby affecting sodium channel activation and promoting spontaneous and repetitive firing. This toxin is slightly toxic to mice. This Centruroides villegasi (Scorpion) protein is Beta-mammal toxin Cv1.